The primary structure comprises 691 residues: DNA ligase (691 aa).

NAD(+) contacts are provided by residues 41–45, 90–91, and Glu130; these read DAEYD and SL. The N6-AMP-lysine intermediate role is filled by Lys132. Residues Arg153, Glu190, Lys307, and Lys331 each coordinate NAD(+). Residues Cys425, Cys428, Cys443, and Cys449 each coordinate Zn(2+). Residues 610–691 enclose the BRCT domain; that stretch reads APQGVLAGKT…LHQLLEGNTP (82 aa).

The protein belongs to the NAD-dependent DNA ligase family. LigA subfamily. Mg(2+) is required as a cofactor. It depends on Mn(2+) as a cofactor.

It carries out the reaction NAD(+) + (deoxyribonucleotide)n-3'-hydroxyl + 5'-phospho-(deoxyribonucleotide)m = (deoxyribonucleotide)n+m + AMP + beta-nicotinamide D-nucleotide.. Functionally, DNA ligase that catalyzes the formation of phosphodiester linkages between 5'-phosphoryl and 3'-hydroxyl groups in double-stranded DNA using NAD as a coenzyme and as the energy source for the reaction. It is essential for DNA replication and repair of damaged DNA. The chain is DNA ligase from Burkholderia cenocepacia (strain HI2424).